We begin with the raw amino-acid sequence, 208 residues long: Imidazole glycerol phosphate synthase subunit HisH (208 aa).

The Glutamine amidotransferase type-1 domain maps to 1–206 (MFAIVDYDTG…KEMVSANDFS (206 aa)). Cysteine 79 serves as the catalytic Nucleophile. Catalysis depends on residues histidine 181 and glutamate 183.

Heterodimer of HisH and HisF.

The protein resides in the cytoplasm. It catalyses the reaction 5-[(5-phospho-1-deoxy-D-ribulos-1-ylimino)methylamino]-1-(5-phospho-beta-D-ribosyl)imidazole-4-carboxamide + L-glutamine = D-erythro-1-(imidazol-4-yl)glycerol 3-phosphate + 5-amino-1-(5-phospho-beta-D-ribosyl)imidazole-4-carboxamide + L-glutamate + H(+). The catalysed reaction is L-glutamine + H2O = L-glutamate + NH4(+). Its pathway is amino-acid biosynthesis; L-histidine biosynthesis; L-histidine from 5-phospho-alpha-D-ribose 1-diphosphate: step 5/9. IGPS catalyzes the conversion of PRFAR and glutamine to IGP, AICAR and glutamate. The HisH subunit catalyzes the hydrolysis of glutamine to glutamate and ammonia as part of the synthesis of IGP and AICAR. The resulting ammonia molecule is channeled to the active site of HisF. The chain is Imidazole glycerol phosphate synthase subunit HisH from Lactiplantibacillus plantarum (strain ATCC BAA-793 / NCIMB 8826 / WCFS1) (Lactobacillus plantarum).